A 91-amino-acid polypeptide reads, in one-letter code: uncharacterized protein (91 aa).

The first 18 residues, 1-18 (MKVNLILFSLFLLVSIMA), serve as a signal peptide directing secretion. A lipid anchor (N-palmitoyl cysteine) is attached at Cys19. Residue Cys19 is the site of S-diacylglycerol cysteine attachment.

It is found in the cell membrane. This is an uncharacterized protein from Escherichia coli (strain K12).